The primary structure comprises 405 residues: Cystathionine gamma-lyase (405 aa).

Positions 62, 114, and 119 each coordinate substrate. An N6-(pyridoxal phosphate)lysine modification is found at Lys-212. Glu-339 is a binding site for substrate.

The protein belongs to the trans-sulfuration enzymes family. Homotetramer. Interacts with CALM in a calcium-dependent manner. Requires pyridoxal 5'-phosphate as cofactor.

The protein resides in the cytoplasm. The catalysed reaction is L,L-cystathionine + H2O = 2-oxobutanoate + L-cysteine + NH4(+). It participates in amino-acid biosynthesis; L-cysteine biosynthesis; L-cysteine from L-homocysteine and L-serine: step 2/2. Functionally, catalyzes the last step in the trans-sulfuration pathway from methionine to cysteine. Has broad substrate specificity. Converts cystathionine to cysteine, ammonia and 2-oxobutanoate. Converts two cysteine molecules to lanthionine and hydrogen sulfide. Can also accept homocysteine as substrate. Specificity depends on the levels of the endogenous substrates. Generates the endogenous signaling molecule hydrogen sulfide (H2S), and so contributes to the regulation of blood pressure. Acts as a cysteine-protein sulfhydrase by mediating sulfhydration of target proteins: sulfhydration consists of converting -SH groups into -SSH on specific cysteine residues of target proteins such as GAPDH, PTPN1 and NF-kappa-B subunit RELA, thereby regulating their function. This is Cystathionine gamma-lyase (CTH) from Bos taurus (Bovine).